Consider the following 508-residue polypeptide: 25-hydroxyvitamin D-1 alpha hydroxylase, mitochondrial (508 aa).

Cysteine 455 contributes to the heme binding site.

This sequence belongs to the cytochrome P450 family. Requires heme as cofactor. In terms of tissue distribution, kidney.

It localises to the mitochondrion membrane. The enzyme catalyses calcidiol + 2 reduced [adrenodoxin] + O2 + 2 H(+) = calcitriol + 2 oxidized [adrenodoxin] + H2O. It carries out the reaction secalciferol + 2 reduced [adrenodoxin] + O2 + 2 H(+) = calcitetrol + 2 oxidized [adrenodoxin] + H2O. It catalyses the reaction 25-hydroxy-24-oxocalciol + 2 reduced [adrenodoxin] + O2 + 2 H(+) = (1S)-1,25-dihydroxy-24-oxocalciol + 2 oxidized [adrenodoxin] + H2O. The catalysed reaction is 25-hydroxyvitamin D2 + 2 reduced [adrenodoxin] + O2 + 2 H(+) = 1alpha,25-dihydroxyvitamin D2 + 2 oxidized [adrenodoxin] + H2O. It participates in hormone biosynthesis; vitamin D biosynthesis. Activated by cardiolipin and dioleoyl phosphatidylethanolamine (DOPE), phospholipids found in the inner mitochondrial membrane. Inhibited by high substrate concentration. A cytochrome P450 monooxygenase involved in vitamin D metabolism and in calcium and phosphorus homeostasis. Catalyzes the rate-limiting step in the activation of vitamin D in the kidney, namely the hydroxylation of 25-hydroxyvitamin D3/calcidiol at the C1alpha-position to form the hormonally active form of vitamin D3, 1alpha,25-dihydroxyvitamin D3/calcitriol that acts via the vitamin D receptor (VDR). Has 1alpha-hydroxylase activity on vitamin D intermediates of the CYP24A1-mediated inactivation pathway. Converts 24R,25-dihydroxyvitamin D3/secalciferol to 1-alpha,24,25-trihydroxyvitamin D3, an active ligand of VDR. Also active on 25-hydroxyvitamin D2. Mechanistically, uses molecular oxygen inserting one oxygen atom into a substrate, and reducing the second into a water molecule, with two electrons provided by NADPH via FDXR/adrenodoxin reductase and FDX1/adrenodoxin. The polypeptide is 25-hydroxyvitamin D-1 alpha hydroxylase, mitochondrial (CYP27B1) (Homo sapiens (Human)).